We begin with the raw amino-acid sequence, 90 residues long: Delta-aiptatoxin-Adi1a (90 aa).

Residues 1-21 form the signal peptide; the sequence is MKTAMLIAVLGFCAALCFVES. Positions 22 to 44 are excised as a propeptide; it reads SHEEEREAAVYLTDLVSKAESAI. 3 disulfides stabilise this stretch: Cys-50–Cys-86, Cys-52–Cys-77, and Cys-70–Cys-87.

Belongs to the sea anemone sodium channel inhibitory toxin family.

Its subcellular location is the secreted. The protein localises to the nematocyst. Its function is as follows. Cardioactive peptide that acts on voltage-gated sodium channels (hNav1.5/SCN5A) and voltage-gated potassium channels (Kv). The activity on sodium channels consists of inhibition on sodium current inactivation with no significant effect on current activation. This effect may be caused by direct interaction of the toxin with sodium channel site-3. The activity on potassium channels consists of a significant increase of the amplitude of the transient component of the potassium current, shifting the current threshold to more negative membrane potentials. These effects are concentration-dependent and reversible and may be due to a direct interaction between the toxin and the voltage-sensing domain of the channel. Physiologically, this toxin increases the amplitude of cardiomyocyte contraction and slows the late phase of the twitch relaxation velocity with no induction of spontaneous twitching. It increases action potential duration of cardiomyocytes with no effect on its threshold and on the cell resting potential. On insects, it shows neurotoxic activity to the blowfly larvae S.falculaty, causing an immediate spasm that progressed to body contraction and paralysis. This is Delta-aiptatoxin-Adi1a from Exaiptasia diaphana (Tropical sea anemone).